The sequence spans 81 residues: Photosystem I iron-sulfur center (81 aa).

4Fe-4S ferredoxin-type domains lie at 2–31 and 39–68; these read AHTV…MVPW and MASA…IRVY. [4Fe-4S] cluster contacts are provided by Cys-11, Cys-14, Cys-17, Cys-21, Cys-48, Cys-51, Cys-54, and Cys-58.

As to quaternary structure, the eukaryotic PSI reaction center is composed of at least 11 subunits. The cofactor is [4Fe-4S] cluster.

The protein resides in the plastid. It localises to the chloroplast thylakoid membrane. The enzyme catalyses reduced [plastocyanin] + hnu + oxidized [2Fe-2S]-[ferredoxin] = oxidized [plastocyanin] + reduced [2Fe-2S]-[ferredoxin]. Functionally, apoprotein for the two 4Fe-4S centers FA and FB of photosystem I (PSI); essential for photochemical activity. FB is the terminal electron acceptor of PSI, donating electrons to ferredoxin. The C-terminus interacts with PsaA/B/D and helps assemble the protein into the PSI complex. Required for binding of PsaD and PsaE to PSI. PSI is a plastocyanin/cytochrome c6-ferredoxin oxidoreductase, converting photonic excitation into a charge separation, which transfers an electron from the donor P700 chlorophyll pair to the spectroscopically characterized acceptors A0, A1, FX, FA and FB in turn. The protein is Photosystem I iron-sulfur center of Cyanidioschyzon merolae (strain NIES-3377 / 10D) (Unicellular red alga).